Reading from the N-terminus, the 2602-residue chain is MPVTEKDLAEDAPWKKIQQNTFTRWCNEHLKCVNKRIGNLQTDLSDGLRLIALLEVLSQKRMHHKYHQRPTFRQMKLENVSVALEFLDHESIKLVSIDSKAIVDGNLKLILGLVWTLILHYSISMPVWEDEGDDDAKKQTPKQRLLGWIQNKIPYLPITNFNQNWQDGKALGALVDSCAPGLCPDWESWDPRKPVDNAREAMQQADDWLGVPQVITPEEIIHPDVDEHSVMTYLSQFPKAKLKPGAPLKPKLNPKKARAYGRGIEPTGNMVKQPAKFTVDTISAGQGDVMVFVEDPEGNKEEARVTPDSDKNKTYSVEYLPKVTGLHKVIVLFAGQHISKSPFEVNVDKAQGDASKVTAKGPGLETTGNIANKPTYFDIYTAGAGVGDIGIEVEDPQGKNSVELLVEDRGNQVYRCVYKPVQPGPHVVKVSFAGDAIPKSPFGVQIGEACNPNACRASGRGLQPKGVRIRETADFKVDTKAAGSGELGVTVKGPKGLEELVKQKGFLDGVYSFEYYPSTPGKYSVAVTWGGHHIPKSPFEVQVGPEAGMQKVRAWGPGLHGGIVGRSADFVVESIGSEVGTLGFAIEGPSQAKIEYDDQNDGSCDVKYWPKEPGEYAVHIMCDDEDIKDSPYMAFIHPATGDYNPDLVQAYGPGLEKSGCTINNPAEFIVDPKDAGSAPLKILAQDGEGQPIDIQMKSRMDGTYACSYTPLKAIKHTIAVVWGGVNIPHSPYRVNIGQGSHPQKVKVFGPGVERSGLKANEPTHFTVDCTEAGEGDVSVGIKCDARVLSDDEEDVDFDIIHNANDTFTVKYVPPAPGRYTIKVLFASQEIPASPFRVKVDPSHDASKVKAEGPGLSKAGVENGKPTHFTVHTKGAGKAPLNVQFSSPLPGEAVKDLDIIDNYDYSHTVKYTPTQQGNMQVLVTYGGDPIPKSPFTVGVAAPLDLSKIKINGLENRVEVGKDQEFAIDTNGAGGQGKLDVTILSPSRKVVPCLVAPVAGRECSTAKFIPREEGLFAVDVTYDGHPVPGSPYTVEASLPPDPTKVKAHGPGLEGGLVGKPAEFTIDTKGAGTGGLGLTVEGPCEAKIECSDNGDGTCSVSYLPTKPGEYFVNILFEEVHIPGSPFKADIEMPFDPSKVVASGPGLEHGKVGEPGILCVDCSEAGPGTLGLEAVSDSGAKAEVSIQNNKDGTYAVTYVPLTAGMYTLTMKYGGELVPHFPAWVKVEPAIDTSGIKAFGPGIEGKDVFREATTDFTVDSRPLTQVGGDHIKAQITNPSGASTECFVKDNADGTYQVEYTPFEKGFHVVEVTYDDVPIPNSPFKVAVTEGCQPSRVHAQGPGLKEAFTNKSNVFTVVTRGAGIGGLGITVEGPSESKINCRDNKDGSCSAEYIPFAPGDYDVNITYGGVHIPGSPFRVPSKDVVDPSKVKIAGPGLSSCVRACIPQSFTVDSSKAGLAPLEVRVLGPRGLVEPVNVVDNGDGTHTVTYTPSQEGPYIVSVKYADEEIPRSPFKVKVLPTYDASKVTASGPGLSAYGVPASLPVEFAIDARDAGEGLLAVQITDQEGKPQRATVHDNKDGTYAVTYIPDKTGRYMIGVTYGGDNIPLSPYRIRATQTGDASKCLATGPGIAPTVKTGEEVGFVVDAKTAGKGKVTCVILTPDGTEAEADVIENEDGTYDIFYTAAKPGTYVIYVRFGGVDIPNSPFTVMATDGEVTAMEEAPVNACPPGFRPWVTEEAYVPVSDMNGLGFKPFDLVIPFAVRKGEITGTVHMPSGKKATPEIVDNKDGTVTVRYAPTEVGLHEMHIKYRGSHIPESPLQFYVNYPNSGSVSAYGPGLVYGVANKTATFTIVTEDAGEGGLDLAIEGPSKAEISCIDNKDGTCTVTYLPTLPGDYSILVKYNDKHIPGSPFTAKITDDNRRCSQVKLGSAADFLLDISETDLSTLTASIKAPSGRDEPCLLKRLPNNHIGISFIPREVGEHLVSIKKNGNHVANSPVSIMVVQSEIGDARRAKVYGQGLSEGRTFEMSDFIVDTRDAGYGGISLAVEGPSKVDIQTEDLEDGTCKVSYFPTVPGVYIVSTKFADEHVPGSPFTVKISGEGRVRESITRTSRAPAVATVGSICDLNLKIPEINSSDMSAHVTSPSGHVTEAEIVPMGKNSHCVRFVPQEMGVHTVSVKYRGQHVTGSPFQFTVGPLGEGGAHKVRAGGPGLERGEAGIPAEFSIWTREAGAGGLSIAVEGPSKAEITFDDHKNGSCGVSYIAQEPGNYEVSIKFNDEHIPDSPYLVPVIAPSDDARCLTVLSLQESGLKVNQPASFAIRLNGAKGKIDAKVHSPSGAVEECHVSELEPDKYAVRFIPHENGIHTIDVKFNGSHVVGSPFKVRVGEPGQAGNPALVSAYGAGLETGTTGIQSEFFINTTQAGPGTLSVTIEGPSKVKMDCQEIPEGYKVMYTPMAPGNYLIGVKYGGPNHISRSPFKAKVTGQRLVSPGSANETSSILVESVTRSSTETCYSAIPKSSSDASKVTSKGAGLSKAFVGQKSSFLVDCSKAGSNMLLIGVHGPTTPCEEVSMKHVGKQQYNVTYVVKERGDYVLAVKWGEEHIPGSPFHVTVP.

The interval 1-239 (MPVTEKDLAE…VMTYLSQFPK (239 aa)) is actin-binding. Calponin-homology (CH) domains lie at 16 to 122 (KIQQ…LHYS) and 139 to 242 (QTPK…KAKL). Thr-216 carries the phosphothreonine modification. The disordered stretch occupies residues 244-267 (PGAPLKPKLNPKKARAYGRGIEPT). Filamin repeat units lie at residues 249–347 (KPKL…EVNV), 349–446 (KAQG…GVQI), 447–543 (GEAC…EVQV), 544–636 (GPEA…MAFI), 640–736 (TGDY…RVNI), 737–839 (GQGS…RVKV), 840–938 (DPSH…TVGV), 939–1034 (AAPL…TVEA), 1035–1127 (SLPP…KADI), 1128–1222 (EMPF…WVKV), 1223–1322 (EPAI…KVAV), 1323–1415 (TEGC…RVPS), 1416–1511 (KDVV…KVKV), 1512–1608 (LPTY…RIRA), and 1609–1704 (TQTG…TVMA). Thr-519 is subject to Phosphothreonine. Lys-681 carries the post-translational modification N6-acetyllysine. Residue Ser-730 is modified to Phosphoserine. Basic and acidic residues predominate over residues 837 to 850 (VKVDPSHDASKVKA). Residues 837 to 862 (VKVDPSHDASKVKAEGPGLSKAGVEN) are disordered. A phosphoserine mark is found at Ser-886, Ser-932, Ser-983, and Ser-1028. The residue at position 1307 (Thr-1307) is a Phosphothreonine. The residue at position 1316 (Ser-1316) is a Phosphoserine. Phosphoserine is present on residues Ser-1433, Ser-1505, and Ser-1602. The hinge 1 stretch occupies residues 1705-1728 (TDGEVTAMEEAPVNACPPGFRPWV). Filamin repeat units lie at residues 1729–1813 (TEEA…SPLQ), 1816–1908 (VNYP…TAKI), 1919–1994 (KLGS…SIMV), 1997–2089 (SEIG…TVKI), 2091–2185 (GEGR…QFTV), 2188–2280 (LGEG…LVPV), 2282–2375 (APSD…KVRV), and 2379–2471 (GQAG…KAKV). The residue at position 1780 (Lys-1780) is an N6-acetyllysine. 2 positions are modified to phosphoserine: Ser-2083 and Ser-2113. Phosphoserine is present on residues Ser-2369 and Ser-2465. A Glycyl lysine isopeptide (Lys-Gly) (interchain with G-Cter in ISG15) cross-link involves residue Lys-2468. The interval 2472 to 2506 (TGQRLVSPGSANETSSILVESVTRSSTETCYSAIP) is hinge 2. The segment at 2472–2602 (TGQRLVSPGS…PGSPFHVTVP (131 aa)) is self-association site, tail. Phosphoserine occurs at positions 2478, 2481, and 2492. The Filamin 24 repeat unit spans residues 2507 to 2601 (KSSSDASKVT…IPGSPFHVTV (95 aa)). Residues Lys-2518 and Lys-2524 each carry the N6-succinyllysine modification. Lys-2576 bears the N6-acetyllysine mark.

It belongs to the filamin family. In terms of assembly, homodimer. Interacts with FLNA, FLNC, INPPL1, ITGB1A, ITGB1D, ITGB3, ITGB6, MYOT, MYOZ1, PSEN1 and PSEN2. Interacts with MICALL2. Interacts with RFLNA and RFLNB. Interacts with ASB2 isoform 1; the interaction targets FLNB for proteasomal degradation. Post-translationally, ISGylation prevents ability to interact with the upstream activators of the JNK cascade and inhibits IFNA-induced JNK signaling. In terms of processing, ubiquitination by a SCF-like complex containing ASB2 isoform 1 leads to proteasomal degradation which promotes muscle differentiation. Expressed in hippocampus, cortex, cerebellar Purkinje cells and granule cell layers.

Its subcellular location is the cytoplasm. The protein localises to the cell cortex. The protein resides in the cytoskeleton. It is found in the stress fiber. It localises to the myofibril. Its subcellular location is the sarcomere. The protein localises to the z line. Functionally, connects cell membrane constituents to the actin cytoskeleton. May promote orthogonal branching of actin filaments and links actin filaments to membrane glycoproteins. Anchors various transmembrane proteins to the actin cytoskeleton. The chain is Filamin-B (Flnb) from Mus musculus (Mouse).